Here is a 131-residue protein sequence, read N- to C-terminus: Small ribosomal subunit protein uS11 (131 aa).

Belongs to the universal ribosomal protein uS11 family. Part of the 30S ribosomal subunit. Interacts with proteins S7 and S18. Binds to IF-3.

Functionally, located on the platform of the 30S subunit, it bridges several disparate RNA helices of the 16S rRNA. Forms part of the Shine-Dalgarno cleft in the 70S ribosome. In Thermotoga neapolitana (strain ATCC 49049 / DSM 4359 / NBRC 107923 / NS-E), this protein is Small ribosomal subunit protein uS11.